The sequence spans 398 residues: Bombesin receptor subtype-3 (398 aa).

The Extracellular portion of the chain corresponds to 1 to 40 (MAQRQPHSPNQTLISITNDTESSSVVSNDNTNKGRSGDNS). N-linked (GlcNAc...) asparagine glycosylation is found at Asn10 and Asn18. The chain crosses the membrane as a helical span at residues 41 to 62 (PGIEALCAIYITYAVIISVGIL). At 63–81 (GNAILIKVFFKTKSMQTVP) the chain is on the cytoplasmic side. A helical transmembrane segment spans residues 82–102 (NIFITSLAFGDLLLLLTCVPV). The Extracellular portion of the chain corresponds to 103–120 (DATHYLAEGWLFGRIGCK). Cys119 and Cys202 are disulfide-bonded. Residues 121–142 (VLSFIRLTSVGVSVFTLTILSA) form a helical membrane-spanning segment. Topologically, residues 143–162 (DRYKAVVKPLERQPSNAILK) are cytoplasmic. A helical membrane pass occupies residues 163–183 (TCIKAGCVWIVSMIFALPEAI). The Extracellular portion of the chain corresponds to 184–219 (FSNVYSFRDPNKNVTFESCTSYPVSKKLLQEIHSLL). Residues 220-240 (CFLVFYIIPLSIISVYYSLIA) form a helical membrane-spanning segment. Topologically, residues 241–271 (RTLYKSTLNIPTEEQGHARKQIESRKRIART) are cytoplasmic. Residues 272-292 (VLVLVALFALCWLPNHLLYLY) form a helical membrane-spanning segment. Residues 293–312 (HSFTSQTYVDPSAMHFIFTI) lie on the Extracellular side of the membrane. A helical transmembrane segment spans residues 313–332 (FSRVLAFSNSCVNPFALYWL). Over 333 to 398 (SKTFQKHFKA…CSVKQAEDRV (66 aa)) the chain is Cytoplasmic. A lipid anchor (S-palmitoyl cysteine) is attached at Cys346.

This sequence belongs to the G-protein coupled receptor 1 family. Interacts with C6orf89.

The protein resides in the cell membrane. In terms of biological role, role in sperm cell division, maturation, or function. This receptor mediates its action by association with G proteins that activate a phosphatidylinositol-calcium second messenger system. This chain is Bombesin receptor subtype-3 (BRS3), found in Macaca mulatta (Rhesus macaque).